Consider the following 388-residue polypeptide: Succinate--CoA ligase [ADP-forming] subunit beta (388 aa).

The ATP-grasp domain occupies 9-244 (KQLFARYGLP…PSQEDSREAH (236 aa)). Residues lysine 46, 53-55 (GRG), glutamate 99, threonine 102, and glutamate 107 each bind ATP. Asparagine 199 and aspartate 213 together coordinate Mg(2+). Residues asparagine 264 and 321 to 323 (GIV) each bind substrate.

Belongs to the succinate/malate CoA ligase beta subunit family. Heterotetramer of two alpha and two beta subunits. The cofactor is Mg(2+).

It carries out the reaction succinate + ATP + CoA = succinyl-CoA + ADP + phosphate. The catalysed reaction is GTP + succinate + CoA = succinyl-CoA + GDP + phosphate. It participates in carbohydrate metabolism; tricarboxylic acid cycle; succinate from succinyl-CoA (ligase route): step 1/1. In terms of biological role, succinyl-CoA synthetase functions in the citric acid cycle (TCA), coupling the hydrolysis of succinyl-CoA to the synthesis of either ATP or GTP and thus represents the only step of substrate-level phosphorylation in the TCA. The beta subunit provides nucleotide specificity of the enzyme and binds the substrate succinate, while the binding sites for coenzyme A and phosphate are found in the alpha subunit. The protein is Succinate--CoA ligase [ADP-forming] subunit beta of Pectobacterium carotovorum subsp. carotovorum (strain PC1).